The chain runs to 59 residues: Large ribosomal subunit protein bL32 (59 aa).

The span at 1 to 22 shows a compositional bias: basic residues; sequence MAVPKKKTSNSKRDSRRAHWNR. A disordered region spans residues 1–59; the sequence is MAVPKKKTSNSKRDSRRAHWNRKANLAAQRALSTGKSILTGRAKGFEYPTKDDDEDDDE.

The protein belongs to the bacterial ribosomal protein bL32 family.

The sequence is that of Large ribosomal subunit protein bL32 from Acaryochloris marina (strain MBIC 11017).